A 229-amino-acid polypeptide reads, in one-letter code: ADP-ribosylation factor-like protein 6-interacting protein 4 (229 aa).

The segment covering 1-20 (MAHVGSRKRSRSRSRSRSGR) has biased composition (basic residues). The tract at residues 1 to 152 (MAHVGSRKRS…EDNDGPVLTD (152 aa)) is disordered. A compositionally biased stretch (basic and acidic residues) spans 21–35 (RGSEKRSKRSSKDAS). The span at 66–87 (SRSSSTSSSSSSSSSASSSSSS) shows a compositional bias: low complexity. A compositionally biased stretch (basic residues) spans 90–117 (RKKRAKHKEKKRKKKKKKRKKKLKKRVK). Phosphoserine occurs at positions 140 and 174. Lys191 participates in a covalent cross-link: Glycyl lysine isopeptide (Lys-Gly) (interchain with G-Cter in SUMO2).

It belongs to the ARL6IP4 family. Interacts with ZCCHC17. Interacts with SRSF2. Interacts with ARL6. As to expression, widely expressed. Expressed at high level in testis and thymus.

Its subcellular location is the nucleus. It is found in the nucleolus. It localises to the nucleus speckle. Functionally, involved in modulating alternative pre-mRNA splicing with either 5' distal site activation or preferential use of 3' proximal site. This Mus musculus (Mouse) protein is ADP-ribosylation factor-like protein 6-interacting protein 4 (Arl6ip4).